A 79-amino-acid polypeptide reads, in one-letter code: Three-finger toxin A2 (79 aa).

Residues 1-21 form the signal peptide; sequence MKTLLLTLVVVTIVCLDLGNS. 4 cysteine pairs are disulfide-bonded: Cys24–Cys41, Cys34–Cys59, Cys63–Cys71, and Cys72–Cys77.

This sequence belongs to the three-finger toxin family. Short-chain subfamily. Expressed by the venom gland.

It localises to the secreted. In Micrurus laticollaris (Balsas coral snake), this protein is Three-finger toxin A2.